A 577-amino-acid chain; its full sequence is MATDTAAPAAMKVDGSALAGRALAAAGARHMFGVVGIPVTSLASRAAAAGVRFLAFRNEQSAGYAAAAYGFLTGSPGLLLTVSGPGCVHGLAGLSHATANAWPLLMVSGSCSQPDAGRGDFQELDQIAATKPFIKIAVKATTIADIPRLVFQALAATVSGRPGGCYLDIPSDVLHQTLTESEAAALIDAAAADSAKSDSSPPKHKSLDEGIEKAAELLRRAERPLVVFGKGAAYSRAEDAIWKLVDTTGIPFLPTPMGKGVVPDTHPLSATAARSLAIGQCDVALVVGARLNWLLHFGEPPKWSKDVKFILVDVCEEEIELRKPHVGIVGDAKRVVELINREIKDQPFCLAPSHPWVEAITKKARDNVLKMEAQLAKDVVPFNFLTPLRIIRDAILAEGNPAPVVVSEGANTMDVGRAVLVQNEPRTRLDAGTWGTMGVGLGFCVAAAVAEPDRLVVAVEGDSGFGFSAMEVETLVRYQLPVVVIVFNNNGVYGGDRRSPDEITGPYKDDPAPTSFVPAAGYHKMMEAFGGKGYLVETPDELKSALSESFRARKPAVINVIIDPYAGAESGRMQHKN.

Glutamate 59 provides a ligand contact to thiamine diphosphate. The interval 412 to 493 (TMDVGRAVLV…VIVFNNNGVY (82 aa)) is thiamine pyrophosphate binding. Residues aspartate 462 and asparagine 489 each coordinate Mg(2+).

It belongs to the TPP enzyme family. In terms of assembly, homotetramer. The cofactor is Mg(2+). Thiamine diphosphate is required as a cofactor.

It carries out the reaction an (R)-2-hydroxy-long-chain-fatty acyl-CoA = a long-chain fatty aldehyde + formyl-CoA. The catalysed reaction is a 2-hydroxy-3-methyl fatty acyl-CoA = a 2-methyl-branched fatty aldehyde + formyl-CoA. Catalyzes a carbon-carbon cleavage reaction; cleaves a 2-hydroxy-3-methylacyl-CoA into formyl-CoA and a 2-methyl-branched fatty aldehyde. The chain is 2-hydroxyacyl-CoA lyase from Oryza sativa subsp. japonica (Rice).